Here is a 33-residue protein sequence, read N- to C-terminus: Photosystem II reaction center protein Psb30 (33 aa).

A helical membrane pass occupies residues 5–25; it reads LALTLVSLVLVVSAGPLVVVL.

Belongs to the Psb30/Ycf12 family. PSII is composed of 1 copy each of membrane proteins PsbA, PsbB, PsbC, PsbD, PsbE, PsbF, PsbH, PsbI, PsbJ, PsbK, PsbL, PsbM, PsbT, PsbX, PsbY, PsbZ, Psb30/Ycf12, peripheral proteins of the oxygen-evolving complex and a large number of cofactors. It forms dimeric complexes.

The protein localises to the plastid. The protein resides in the chloroplast thylakoid membrane. Functionally, a core subunit of photosystem II (PSII), required for optimal photosynthesis, probably helps stabilize the reaction center. The protein is Photosystem II reaction center protein Psb30 of Chlamydomonas reinhardtii (Chlamydomonas smithii).